We begin with the raw amino-acid sequence, 194 residues long: Probable GTP-binding protein EngB (194 aa).

Residues 22–194 enclose the EngB-type G domain; that stretch reads KIPQIAIVGK…LRIFEEVIEK (173 aa). GTP is bound by residues 30-37, 57-61, 75-78, 142-145, and 173-175; these read GKSNVGKS, GKTRG, DLPG, TKAD, and FSA. Positions 37 and 59 each coordinate Mg(2+).

It belongs to the TRAFAC class TrmE-Era-EngA-EngB-Septin-like GTPase superfamily. EngB GTPase family. It depends on Mg(2+) as a cofactor.

Necessary for normal cell division and for the maintenance of normal septation. In Caldanaerobacter subterraneus subsp. tengcongensis (strain DSM 15242 / JCM 11007 / NBRC 100824 / MB4) (Thermoanaerobacter tengcongensis), this protein is Probable GTP-binding protein EngB.